We begin with the raw amino-acid sequence, 230 residues long: Orotidine 5'-phosphate decarboxylase (230 aa).

Substrate-binding positions include Asp-11, Lys-34, 61–70, Thr-117, Arg-179, Gln-188, Gly-208, and Arg-209; that span reads DLKLHDIPNT. Lys-63 acts as the Proton donor in catalysis.

The protein belongs to the OMP decarboxylase family. Type 1 subfamily. As to quaternary structure, homodimer.

It catalyses the reaction orotidine 5'-phosphate + H(+) = UMP + CO2. It participates in pyrimidine metabolism; UMP biosynthesis via de novo pathway; UMP from orotate: step 2/2. In terms of biological role, catalyzes the decarboxylation of orotidine 5'-monophosphate (OMP) to uridine 5'-monophosphate (UMP). This Streptococcus gordonii (strain Challis / ATCC 35105 / BCRC 15272 / CH1 / DL1 / V288) protein is Orotidine 5'-phosphate decarboxylase.